A 2624-amino-acid chain; its full sequence is Transcription factor TFIIIB component B'' homolog (2624 aa).

A disordered region spans residues 1–142 (MFRRARLSVK…TKEKQPCSDR (142 aa)). The interaction with ZBTB43 stretch occupies residues 1–299 (MFRRARLSVK…TYSSFRKNYY (299 aa)). A compositionally biased stretch (basic and acidic residues) spans 63–77 (PQEKAPRSSTEKTGG). Positions 99–119 (SSTSSLVKSSVSVPSESHPLS) are enriched in low complexity. The segment covering 120 to 132 (TINQEAPQPTATS) has biased composition (polar residues). The segment covering 133–142 (TKEKQPCSDR) has biased composition (basic and acidic residues). Positions 144-177 (RIYKAQKLREMLKEELRKEKKQWKNKYAINESQR) form a coiled coil. The disordered stretch occupies residues 193 to 241 (LPDNNPMTSSLEQEKKTEKPSTPVQTREQEGKSTPNAEDNEMEEETDDG). Residues 212 to 229 (PSTPVQTREQEGKSTPNA) are compositionally biased toward polar residues. A compositionally biased stretch (acidic residues) spans 230–240 (EDNEMEEETDD). The 51-residue stretch at 295–345 (RKNYYSKPWSNKETDMFFLAISMVGTDFSMIGQLFPHRARIEIKNKFKREE) folds into the Myb-like domain. Positions 355 to 470 (AFQEKRPFDF…QKKRRRKKQD (116 aa)) are required for phosphorylation by CSNK2A1. 4 disordered regions span residues 379–449 (EKRK…SRED), 544–567 (LSLSNQQDATSVATESSESSTSDL), 606–663 (ENVK…MNTL), and 729–759 (EEIGANVEKNENESCADRDTPQHMEDQSRKD). Residues 397–407 (TKPRKNVKVKK) are compositionally biased toward basic residues. Over residues 552–565 (ATSVATESSESSTS) the composition is skewed to low complexity. Basic and acidic residues-rich tracts occupy residues 637 to 663 (TESESKNSHSKTSVEKNHVEKDKMNTL) and 736 to 759 (EKNENESCADRDTPQHMEDQSRKD). The 1; approximate repeat unit spans residues 823-877 (GRREISSKEEVLEKILVSGEMAAALRETVRLDTSPKEMVPAEINTKEMQSDLKET). The tract at residues 823–1327 (GRREISSKEE…PRENELEETS (505 aa)) is 9 X 55 AA repeats of G-R-R-X-I-S-P-X-E-N-G-X-E-E-V-K-P-X-X-E-M-E-T-D-L-K-X-T-G-R-E-X-X-X-R-E-K-T-X-E-X-X-D-A-X-E-E-I-D-X-D-L-E-E-T. 6 tandem repeats follow at residues 878–932 (GRRA…LEEA), 933–987 (GRRE…LEET), 988–1040 (GRRK…LEET), 1041–1094 (EREV…LEET), 1095–1148 (EREI…LEET), and 1149–1203 (GRRE…LEET). The residue at position 915 (Thr915) is a Phosphothreonine. Composition is skewed to basic and acidic residues over residues 930 to 957 (EEAGRREISPQKNGPEEVKPLGEVETDL) and 979 to 1006 (EIDKNLEETGRRKISPRENGPEEVKPVD). Residues 930–1222 (EEAGRREISP…GPEEVKPVGK (293 aa)) are disordered. The span at 1030–1041 (DATEEIDLEETE) shows a compositional bias: acidic residues. A compositionally biased stretch (basic and acidic residues) spans 1052 to 1079 (EEVKPLGEMETDLKATGRDSFPRGKTPE). A coiled-coil region spans residues 1078–1103 (PEVIDAIEEIEIDLEETEREISPQEN). Residues 1082-1095 (DAIEEIEIDLEETE) are compositionally biased toward acidic residues. The segment covering 1120-1133 (ATGREISPREKTPE) has biased composition (basic and acidic residues). A compositionally biased stretch (acidic residues) spans 1136-1145 (DATEEIDKDL). Basic and acidic residues predominate over residues 1161–1190 (EEVKPVDEMETDLKTTGREGSSREKTREVI). The segment covering 1194–1204 (EVIETDLEETE) has biased composition (acidic residues). One copy of the 8; approximate repeat lies at 1204–1257 (EREISPQENGPEEVKPVGKMETDLKEIREEISQREKVLAEFSAIREKEIDLKET). The stretch at 1223–1284 (METDLKEIRE…VEEMEADLKE (62 aa)) forms a coiled coil. A 9; approximate repeat occupies 1258–1327 (GKRDIPIMEK…PRENELEETS (70 aa)). Residues 1306–1321 (AELKQTGKTDISPREN) are compositionally biased toward basic and acidic residues. Disordered stretches follow at residues 1306-1348 (AELK…SAVP), 1365-1440 (TPVE…RFKR), 1519-1543 (TERNLSPSNSCEPKEESQSAPVQKN), 1684-1722 (KAKPNLGRAHSKKEEPVLEKVTTDQSKEGKPEDHLLQKG), 1819-1863 (STSE…ASKA), 2130-2164 (GAEMETQRETEKNASKATELENKNLGPVTTAENKD), 2181-2200 (SEVNLTERNENQEESSQEVH), 2207-2241 (VASSETGPCTLGLDRGLGENSVEEPQIKDSKGDSV), 2444-2501 (FQSR…SRPG), and 2519-2566 (SDEP…PSPS). Positions 1326-1344 (TSTSRQTDTHLMQSGSNDF) are enriched in polar residues. The segment covering 1366 to 1378 (PVEEKRNSEKEVS) has biased composition (basic and acidic residues). 3 stretches are compositionally biased toward polar residues: residues 1379 to 1390 (SHFSHFKISSQT), 1411 to 1421 (SDINLSKSLPQ), and 1519 to 1529 (TERNLSPSNSC). Basic and acidic residues predominate over residues 1695–1719 (KKEEPVLEKVTTDQSKEGKPEDHLL). The segment covering 1844–1853 (RGSKRVRGKT) has biased composition (basic residues). Residues 2131 to 2151 (AEMETQRETEKNASKATELEN) are compositionally biased toward basic and acidic residues. A compositionally biased stretch (basic and acidic residues) spans 2470-2479 (VSDKEERTDA). The span at 2488 to 2498 (SRTSSSKASLS) shows a compositional bias: low complexity. Basic residues predominate over residues 2526–2544 (HSKKRLKPLIPGLRKKLKR).

As to quaternary structure, component of TFIIIB complex. The TFIIIB complex has two activities, alpha and beta. The TFIIIB-alpha and TFIIIB-beta activities are required for transcription of genes with TFIIIC-bound internal promoters and PSE transcription factor-bound external promoters, respectively. The TFIIIB-alpha activity complex is composed of TBP, BDP1, and a complex containing both BRF2 and at least four stably associated proteins; YY1 facilitates the formation of TFIIIB-alpha activity complex. The TFIIIB-beta activity complex is composed of TBP, BDP1, and BRF1. Interacts with BRF1; this interaction diminishes during mitosis resulting in the release of BDP1 from chromosomal templates. Component of TFIIIC complex. The TFIIIC complex has two activities, C1 and C2. The TFIIIC2 activity complex is only required for transcription of the 'classical' pol III genes whereas the TFIIIC1 activity complex is required for transcription of all pol III genes. The TFIIIC1 activity complex is composed at least of BDP1. Interacts with ZBTB43. Phosphorylated by CSNK2A1 during mitosis, resulting in its release from chromatin and suppression of polymerase III transcription. As to expression, isoform 2 is highly expressed in cerebellum.

Its subcellular location is the nucleus. Its function is as follows. General activator of RNA polymerase III transcription. Requires for transcription from all three types of polymerase III promoters. Requires for transcription of genes with internal promoter elements and with promoter elements upstream of the initiation site. In Homo sapiens (Human), this protein is Transcription factor TFIIIB component B'' homolog (BDP1).